We begin with the raw amino-acid sequence, 1029 residues long: Putative B3 domain-containing protein Os03g0621600 (1029 aa).

3 DNA-binding regions (TF-B3) span residues 147–240, 339–430, and 450–543; these read DTYF…FDPS, VAVM…RKMK, and EKYF…FDPS. Residues 572–605 are disordered; it reads TSYHDQPKGNKHWMQKDSSSKGNKIGNTRSSNTP. Residues 591 to 605 show a composition bias toward polar residues; the sequence is SKGNKIGNTRSSNTP. The segment at residues 731–824 is a DNA-binding region (TF-B3 4); sequence YKNFFKVMIG…KLKVLIFGPS (94 aa). A compositionally biased stretch (polar residues) spans 852-867; the sequence is SSNSHDLPVKSPQNVS. A disordered region spans residues 852–882; that stretch reads SSNSHDLPVKSPQNVSKSEKQWDSSEQENDT. Positions 934–1029 form a DNA-binding region, TF-B3 5; that stretch reads GCILRKSRVH…SMNVHIIPKK (96 aa).

It is found in the nucleus. The polypeptide is Putative B3 domain-containing protein Os03g0621600 (Oryza sativa subsp. japonica (Rice)).